The chain runs to 782 residues: Structure-specific endonuclease subunit SLX4 (782 aa).

Disordered stretches follow at residues threonine 63 to methionine 91 and lysine 359 to lysine 425. Residues glycine 73 to lysine 84 are compositionally biased toward basic residues. A compositionally biased stretch (polar residues) spans proline 374–aspartate 388.

The protein belongs to the SLX4 family. In terms of assembly, forms a heterodimer with SLX1. Phosphorylated in response to DNA damage.

The protein localises to the nucleus. Regulatory subunit of the SLX1-SLX4 structure-specific endonuclease that resolves DNA secondary structures generated during DNA repair and recombination. Has endonuclease activity towards branched DNA substrates, introducing single-strand cuts in duplex DNA close to junctions with ss-DNA. In Scheffersomyces stipitis (strain ATCC 58785 / CBS 6054 / NBRC 10063 / NRRL Y-11545) (Yeast), this protein is Structure-specific endonuclease subunit SLX4.